The following is a 353-amino-acid chain: Probable protein phosphatase 2C 48 (353 aa).

In terms of domain architecture, PPM-type phosphatase spans 54–348 (FAAVCSRRGE…DDCSAICLFF (295 aa)). 4 residues coordinate Mn(2+): D90, G91, D293, and D339.

The protein belongs to the PP2C family. Mg(2+) serves as cofactor. It depends on Mn(2+) as a cofactor.

The catalysed reaction is O-phospho-L-seryl-[protein] + H2O = L-seryl-[protein] + phosphate. It catalyses the reaction O-phospho-L-threonyl-[protein] + H2O = L-threonyl-[protein] + phosphate. The sequence is that of Probable protein phosphatase 2C 48 from Oryza sativa subsp. japonica (Rice).